The following is a 487-amino-acid chain: Gasdermin-D (487 aa).

Tyr38 carries the phosphotyrosine modification. 3 positions are modified to S-(2-succinyl)cysteine: Cys39, Cys57, and Cys77. 2 beta stranded membrane-spanning segments follow: residues 92 to 98 and 104 to 109; these read QGRVMLS and KISGGA. Position 122 is an S-(2-succinyl)cysteine (Cys122). 2 beta stranded membrane-spanning segments follow: residues 181–187 and 192–198; these read GSGQFTL and CLKGEGK. S-(2-succinyl)cysteine occurs at positions 192 and 265. The S-palmitoyl cysteine moiety is linked to residue Cys192. Positions 278–298 are linker helix loop; sequence IDEEELIEAADFQGLYAEVKA. S-(2-succinyl)cysteine is present on residues Cys299, Cys434, and Cys487.

This sequence belongs to the gasdermin family. As to quaternary structure, homooligomer; homooligomeric ring-shaped pore complex containing 27-28 subunits when inserted in the membrane. Homooligomerization is promoted by the mTORC1 complex in macrophages. In response to a canonical inflammasome stimulus, such as nigericin, recruited to NLRP3 inflammasone with similar kinetics to that of uncleaved CASP1 precursor. Although this recruitment is also observed in the absence of PYCARD, it is more efficient in its presence. Post-translationally, cleavage at Asp-276 by CASP1 (mature and uncleaved precursor forms), CASP4/CASP11 or CASP8 relieves autoinhibition and is sufficient to initiate pyroptosis. Cleavage by CASP1 and CASP4/CASP11 is not strictly dependent on the consensus cleavage site on GSDMD but depends on an exosite interface on CASP1 that recognizes and binds the Gasdermin-D, C-terminal (GSDMD-CT) part. Cleavage by CASP8 takes place following inactivation of MAP3K7/TAK1 by Yersinia toxin YopJ. Cleavage at Asp-88 by CASP3 or CASP7 inactivates the ability to mediate pyroptosis, but generates the Gasdermin-D, p13 chain, which translocates to the nucleus and acts as a transcription regulator. Cleavage by papain allergen generates the Gasdermin-D, p40 chain. In terms of processing, palmitoylated at Cys-192 by ZDHHC5 and ZDHHC9 in response to microbial infection and danger signals. May also be palmitoylated by ZDHHC7. Palmitoylation takes place before cleavage by caspases (CASP1, CASP4, CASP5 or CASP8) and is required for membrane translocation and pore formation. Depalmitoylated by LYPLA2. Succination of Cys-192 by the Krebs cycle intermediate fumarate, which leads to S-(2-succinyl)cysteine residues, inhibits processing by caspases, and ability to initiate pyroptosis. Succination modification is catalyzed by a non-enzymatic reaction caused by an accumulation of fumarate. Post-translationally, glycosylated: O-GlcNAcylation by OGT leads to reduced cleavage by CASP4 and decreased LPS-induced endothelial cell pyroptosis. As to expression, highly expressed in brain endothelial cells.

It is found in the cytoplasm. Its subcellular location is the cytosol. The protein resides in the inflammasome. It localises to the cell membrane. The protein localises to the secreted. It is found in the mitochondrion membrane. Its subcellular location is the nucleus. With respect to regulation, the full-length protein before cleavage is inactive: intramolecular interactions between N- and C-terminal domains mediate autoinhibition in the absence of activation signal. The intrinsic pyroptosis-inducing activity is carried by the released N-terminal moiety (Gasdermin-D, N-terminal) following cleavage by inflammatory caspases CASP1, CASP4/CASP11 or CASP8. Cleavage at Asp-88 by CASP3 or CASP7 inactivates the ability to mediate pyroptosis. Pore formation is specifically inhibited by VHH(GSDMD-1) nanobody, protecting against excessive pyroptosis. Inhibited by small molecule NU6300, which covalently reacts with Cys-191, thereby preventing palmitoylation and pyroptosis. Its function is as follows. Precursor of a pore-forming protein that plays a key role in host defense against pathogen infection and danger signals. This form constitutes the precursor of the pore-forming protein: upon cleavage, the released N-terminal moiety (Gasdermin-D, N-terminal) binds to membranes and forms pores, triggering pyroptosis. Promotes pyroptosis in response to microbial infection and danger signals. Produced by the cleavage of gasdermin-D by inflammatory caspases CASP1 or CASP4/CASP11 in response to canonical, as well as non-canonical (such as cytosolic LPS) inflammasome activators. After cleavage, moves to the plasma membrane where it strongly binds to inner leaflet lipids, including monophosphorylated phosphatidylinositols, such as phosphatidylinositol 4-phosphate, bisphosphorylated phosphatidylinositols, such as phosphatidylinositol (4,5)-bisphosphate, as well as phosphatidylinositol (3,4,5)-bisphosphate, and more weakly to phosphatidic acid and phosphatidylserine. Homooligomerizes within the membrane and forms pores of 10-15 nanometers (nm) of inner diameter, allowing the release of mature interleukin-1 (IL1B and IL18) and triggering pyroptosis. Gasdermin pores also allow the release of mature caspase-7 (CASP7). In some, but not all, cells types, pyroptosis is followed by pyroptotic cell death, which is caused by downstream activation of ninjurin-1 (NINJ1), which mediates membrane rupture (cytolysis). Also forms pores in the mitochondrial membrane, resulting in release of mitochondrial DNA (mtDNA) into the cytosol. Gasdermin-D, N-terminal released from pyroptotic cells into the extracellular milieu rapidly binds to and kills both Gram-negative and Gram-positive bacteria, without harming neighboring mammalian cells, as it does not disrupt the plasma membrane from the outside due to lipid-binding specificity. Under cell culture conditions, also active against intracellular bacteria, such as Listeria monocytogenes. Also active in response to MAP3K7/TAK1 inactivation by Yersinia toxin YopJ, which triggers cleavage by CASP8 and subsequent activation. Required for mucosal tissue defense against enteric pathogens. Activation of the non-canonical inflammasome in brain endothelial cells can lead to excessive pyroptosis, leading to blood-brain barrier breakdown. Strongly binds to bacterial and mitochondrial lipids, including cardiolipin. Does not bind to unphosphorylated phosphatidylinositol, phosphatidylethanolamine nor phosphatidylcholine. In terms of biological role, transcription coactivator produced by the cleavage by CASP3 or CASP7 in the upper small intestine in response to dietary antigens. Required to maintain food tolerance in small intestine: translocates to the nucleus and acts as a coactivator for STAT1 to induce the transcription of CIITA and MHC class II molecules, which in turn induce type 1 regulatory T (Tr1) cells in upper small intestine. Functionally, produced by the cleavage by papain allergen. After cleavage, moves to the plasma membrane and homooligomerizes within the membrane and forms pores of 10-15 nanometers (nm) of inner diameter, allowing the specific release of mature interleukin-33 (IL33), promoting type 2 inflammatory immune response. This chain is Gasdermin-D, found in Mus musculus (Mouse).